The chain runs to 459 residues: Protein FAM90A27P (459 aa).

A compositionally biased stretch (basic residues) spans 1–10 (MARHSVHHQA). Disordered stretches follow at residues 1 to 41 (MARH…ESRV), 74 to 136 (SHKE…WKEP), 153 to 239 (HTTK…ALQP), and 259 to 459 (PDAD…SDSD). A compositionally biased stretch (basic and acidic residues) spans 125 to 136 (PQEKMQEAWKEP). Residues 184–194 (HNDSPQLSTCG) are compositionally biased toward polar residues. The span at 341-353 (KATAETAATKTAT) shows a compositional bias: low complexity. The span at 415–427 (PPENSASAQSPRF) shows a compositional bias: polar residues.

Belongs to the FAM90 family.

This Homo sapiens (Human) protein is Protein FAM90A27P (FAM90A27P).